The primary structure comprises 124 residues: Darcynin homolog (124 aa).

This sequence belongs to the darcynin family.

The polypeptide is Darcynin homolog (Granulibacter bethesdensis (strain ATCC BAA-1260 / CGDNIH1)).